A 275-amino-acid chain; its full sequence is Ribosomal RNA small subunit methyltransferase A (275 aa).

Residues asparagine 19, leucine 21, glycine 46, glutamate 71, aspartate 94, and asparagine 117 each contribute to the S-adenosyl-L-methionine site.

This sequence belongs to the class I-like SAM-binding methyltransferase superfamily. rRNA adenine N(6)-methyltransferase family. RsmA subfamily.

It is found in the cytoplasm. The catalysed reaction is adenosine(1518)/adenosine(1519) in 16S rRNA + 4 S-adenosyl-L-methionine = N(6)-dimethyladenosine(1518)/N(6)-dimethyladenosine(1519) in 16S rRNA + 4 S-adenosyl-L-homocysteine + 4 H(+). In terms of biological role, specifically dimethylates two adjacent adenosines (A1518 and A1519) in the loop of a conserved hairpin near the 3'-end of 16S rRNA in the 30S particle. May play a critical role in biogenesis of 30S subunits. In Burkholderia mallei (strain NCTC 10247), this protein is Ribosomal RNA small subunit methyltransferase A.